The following is a 251-amino-acid chain: Hydroxyacylglutathione hydrolase (251 aa).

Positions 53, 55, 57, 58, 110, 127, and 165 each coordinate Zn(2+).

The protein belongs to the metallo-beta-lactamase superfamily. Glyoxalase II family. As to quaternary structure, monomer. Zn(2+) serves as cofactor.

The catalysed reaction is an S-(2-hydroxyacyl)glutathione + H2O = a 2-hydroxy carboxylate + glutathione + H(+). It functions in the pathway secondary metabolite metabolism; methylglyoxal degradation; (R)-lactate from methylglyoxal: step 2/2. Functionally, thiolesterase that catalyzes the hydrolysis of S-D-lactoyl-glutathione to form glutathione and D-lactic acid. In Escherichia coli O9:H4 (strain HS), this protein is Hydroxyacylglutathione hydrolase.